Here is a 997-residue protein sequence, read N- to C-terminus: Protein argonaute 5 (997 aa).

Composition is skewed to gly residues over residues 1-16 and 43-59; these read MSNRGGGGHGGASRGR and GGRGGSVSAGRGRGNVG. Residues 1 to 144 form a disordered region; the sequence is MSNRGGGGHG…TSLPPASSKA (144 aa). Positions 93–106 are enriched in low complexity; that stretch reads SVASSSKTVSVASS. The span at 116 to 129 shows a compositional bias: polar residues; sequence VSETMSNLQITSTE. The region spanning 360–471 is the PAZ domain; that stretch reads VVTDFISKFL…LPMELCQIDE (112 aa). The region spanning 638–958 is the Piwi domain; it reads LLIVILPDVT…AAFRARYYME (321 aa). The a divalent metal cation site is built by Asp-721 and Asp-807. 3 interaction with guide RNA regions span residues 847 to 848, 893 to 901, and 930 to 952; these read KR, HAGIQGTSR, and YARCTKSVSIVPPAYYAHLAAFR. His-947 is an a divalent metal cation binding site.

Belongs to the argonaute family. Ago subfamily. The cofactor is Mg(2+). Mn(2+) serves as cofactor.

In terms of biological role, involved in RNA-mediated post-transcriptional gene silencing (PTGS). Main component of the RNA-induced silencing complex (RISC) that binds to a short guide RNA such as a microRNA (miRNA) or small interfering RNA (siRNA). RISC uses the mature miRNA or siRNA as a guide for slicer-directed cleavage of homologous mRNAs to repress gene expression. Associates with siRNAs of various sizes, from 21-24 nucleotide in length and preferentially recruits small RNAs with a 5' terminal cytosine. Probably involved in antiviral RNA silencing. Associates with siRNAs derived from cucumber mosaic virus (CMV). Targeted by the turnip yellows virus (TuYV) protein P0 (via F-box-like domain) for probable proteasome degradation and thereby inactivating AGO5 function in RNA silencing. In Arabidopsis thaliana (Mouse-ear cress), this protein is Protein argonaute 5 (AGO5).